The chain runs to 73 residues: Translation initiation factor IF-1 (73 aa).

One can recognise an S1-like domain in the interval 1–73 (MAKKDGVIEI…TRGRIVYRYK (73 aa)).

The protein belongs to the IF-1 family. Component of the 30S ribosomal translation pre-initiation complex which assembles on the 30S ribosome in the order IF-2 and IF-3, IF-1 and N-formylmethionyl-tRNA(fMet); mRNA recruitment can occur at any time during PIC assembly.

It is found in the cytoplasm. Its function is as follows. One of the essential components for the initiation of protein synthesis. Stabilizes the binding of IF-2 and IF-3 on the 30S subunit to which N-formylmethionyl-tRNA(fMet) subsequently binds. Helps modulate mRNA selection, yielding the 30S pre-initiation complex (PIC). Upon addition of the 50S ribosomal subunit IF-1, IF-2 and IF-3 are released leaving the mature 70S translation initiation complex. The sequence is that of Translation initiation factor IF-1 from Paenarthrobacter aurescens (strain TC1).